Here is a 426-residue protein sequence, read N- to C-terminus: Glutamate-1-semialdehyde 2,1-aminomutase (426 aa).

Lysine 265 carries the N6-(pyridoxal phosphate)lysine modification.

This sequence belongs to the class-III pyridoxal-phosphate-dependent aminotransferase family. HemL subfamily. As to quaternary structure, homodimer. Pyridoxal 5'-phosphate serves as cofactor.

The protein localises to the cytoplasm. The catalysed reaction is (S)-4-amino-5-oxopentanoate = 5-aminolevulinate. The protein operates within porphyrin-containing compound metabolism; protoporphyrin-IX biosynthesis; 5-aminolevulinate from L-glutamyl-tRNA(Glu): step 2/2. The chain is Glutamate-1-semialdehyde 2,1-aminomutase from Yersinia pestis bv. Antiqua (strain Antiqua).